The chain runs to 83 residues: Mu-theraphotoxin-Hhn2n (83 aa).

Positions 1 to 21 are cleaved as a signal peptide; the sequence is MKASMYLALAGLVLLFVVGYA. The propeptide occupies 22 to 48; it reads SESEEKEFPRELLSKIFAVDDFKGEER. 3 cysteine pairs are disulfide-bonded: Cys50/Cys65, Cys57/Cys70, and Cys64/Cys77. A Leucine amide modification is found at Leu81.

Belongs to the neurotoxin 10 (Hwtx-1) family. 15 (Hntx-3) subfamily. As to quaternary structure, monomer. Expressed by the venom gland.

It is found in the secreted. In terms of biological role, lethal neurotoxin. Selectively blocks tetrodotoxin-sensitive voltage-gated sodium channels (Nav). Does not affect tetrodotoxin-resistant voltage-gated sodium channels or calcium channels. This is Mu-theraphotoxin-Hhn2n from Cyriopagopus hainanus (Chinese bird spider).